The primary structure comprises 202 residues: ATP-dependent Clp protease proteolytic subunit (202 aa).

Serine 101 serves as the catalytic Nucleophile. Histidine 126 is a catalytic residue.

The protein belongs to the peptidase S14 family. As to quaternary structure, component of the chloroplastic Clp protease core complex.

Its subcellular location is the plastid. It localises to the chloroplast stroma. The catalysed reaction is Hydrolysis of proteins to small peptides in the presence of ATP and magnesium. alpha-casein is the usual test substrate. In the absence of ATP, only oligopeptides shorter than five residues are hydrolyzed (such as succinyl-Leu-Tyr-|-NHMec, and Leu-Tyr-Leu-|-Tyr-Trp, in which cleavage of the -Tyr-|-Leu- and -Tyr-|-Trp bonds also occurs).. Cleaves peptides in various proteins in a process that requires ATP hydrolysis. Has a chymotrypsin-like activity. Plays a major role in the degradation of misfolded proteins. This chain is ATP-dependent Clp protease proteolytic subunit, found in Buxus microphylla (Littleleaf boxwood).